Reading from the N-terminus, the 140-residue chain is Protein SNA4 (140 aa).

Residues 1 to 8 (MCCYCVCC) lie on the Cytoplasmic side of the membrane. 5 S-palmitoyl cysteine lipidation sites follow: Cys-2, Cys-3, Cys-5, Cys-7, and Cys-8. Residues 9-29 (TVSDFILYIVAFFFPPAAVLL) form a helical membrane-spanning segment. Residues 30–41 (RSGPCSSDFLLN) lie on the Vacuolar side of the membrane. The chain crosses the membrane as a helical span at residues 42–62 (VLLTLLGFLPGMLHAFYYITI). Over 63–140 (TSPLRNAEYV…LVESPPPYVP (78 aa)) the chain is Cytoplasmic. Positions 84–140 (RNVPSNRPQNSQTPQNRPQQGSSARNVYPSVETPLLQGAAPHDNKQSLVESPPPYVP) are disordered. Over residues 85–108 (NVPSNRPQNSQTPQNRPQQGSSAR) the composition is skewed to polar residues. Lys-128 is covalently cross-linked (Glycyl lysine isopeptide (Lys-Gly) (interchain with G-Cter in ubiquitin)). Residue Ser-134 is modified to Phosphoserine.

Belongs to the UPF0057 (PMP3) family.

Its subcellular location is the vacuole membrane. The protein is Protein SNA4 (SNA4) of Saccharomyces cerevisiae (strain ATCC 204508 / S288c) (Baker's yeast).